The primary structure comprises 158 residues: SsrA-binding protein (158 aa).

It belongs to the SmpB family.

It is found in the cytoplasm. Its function is as follows. Required for rescue of stalled ribosomes mediated by trans-translation. Binds to transfer-messenger RNA (tmRNA), required for stable association of tmRNA with ribosomes. tmRNA and SmpB together mimic tRNA shape, replacing the anticodon stem-loop with SmpB. tmRNA is encoded by the ssrA gene; the 2 termini fold to resemble tRNA(Ala) and it encodes a 'tag peptide', a short internal open reading frame. During trans-translation Ala-aminoacylated tmRNA acts like a tRNA, entering the A-site of stalled ribosomes, displacing the stalled mRNA. The ribosome then switches to translate the ORF on the tmRNA; the nascent peptide is terminated with the 'tag peptide' encoded by the tmRNA and targeted for degradation. The ribosome is freed to recommence translation, which seems to be the essential function of trans-translation. The chain is SsrA-binding protein from Acinetobacter baumannii (strain AB307-0294).